The following is a 148-amino-acid chain: Deoxyuridine 5'-triphosphate nucleotidohydrolase (148 aa).

Residues 67-69 (RSG), Asn80, 84-86 (LID), and Met94 contribute to the substrate site.

Belongs to the dUTPase family. Mg(2+) serves as cofactor.

It carries out the reaction dUTP + H2O = dUMP + diphosphate + H(+). It functions in the pathway pyrimidine metabolism; dUMP biosynthesis; dUMP from dCTP (dUTP route): step 2/2. In terms of biological role, this enzyme is involved in nucleotide metabolism: it produces dUMP, the immediate precursor of thymidine nucleotides and it decreases the intracellular concentration of dUTP so that uracil cannot be incorporated into DNA. In Burkholderia thailandensis (strain ATCC 700388 / DSM 13276 / CCUG 48851 / CIP 106301 / E264), this protein is Deoxyuridine 5'-triphosphate nucleotidohydrolase.